Consider the following 130-residue polypeptide: MIGNWNYGTGRRKSAVARVFIKSGKGDIIVNGKPVADYFARETSLMMVRQPLELTNHGATFDIKVNVVGGGETGQAGAVRHGITRALIDYDATLKPTLSKAGLVTRDAREVERKKVGLHKARRRKQFSKR.

Belongs to the universal ribosomal protein uS9 family.

The protein is Small ribosomal subunit protein uS9 of Ralstonia nicotianae (strain ATCC BAA-1114 / GMI1000) (Ralstonia solanacearum).